Here is a 594-residue protein sequence, read N- to C-terminus: UvrABC system protein C (594 aa).

A GIY-YIG domain is found at 14-91 (DQPGCYLMKD…IKKYDPKYNI (78 aa)). Residues 196-231 (KEVRSELEIKMYEASEKLEFERAKELRDQIAHIDAI) form the UVR domain.

This sequence belongs to the UvrC family. As to quaternary structure, interacts with UvrB in an incision complex.

The protein resides in the cytoplasm. Functionally, the UvrABC repair system catalyzes the recognition and processing of DNA lesions. UvrC both incises the 5' and 3' sides of the lesion. The N-terminal half is responsible for the 3' incision and the C-terminal half is responsible for the 5' incision. This chain is UvrABC system protein C, found in Bacillus cereus (strain G9842).